The sequence spans 1410 residues: DNA-directed RNA polymerase subunit beta' (1410 aa).

Residues cysteine 69, cysteine 71, cysteine 84, and cysteine 87 each contribute to the Zn(2+) site. The Mg(2+) site is built by aspartate 461, aspartate 463, and aspartate 465. Residues cysteine 810, cysteine 884, cysteine 891, and cysteine 894 each coordinate Zn(2+).

The protein belongs to the RNA polymerase beta' chain family. In terms of assembly, the RNAP catalytic core consists of 2 alpha, 1 beta, 1 beta' and 1 omega subunit. When a sigma factor is associated with the core the holoenzyme is formed, which can initiate transcription. It depends on Mg(2+) as a cofactor. Requires Zn(2+) as cofactor.

It carries out the reaction RNA(n) + a ribonucleoside 5'-triphosphate = RNA(n+1) + diphosphate. Functionally, DNA-dependent RNA polymerase catalyzes the transcription of DNA into RNA using the four ribonucleoside triphosphates as substrates. In Ehrlichia chaffeensis (strain ATCC CRL-10679 / Arkansas), this protein is DNA-directed RNA polymerase subunit beta'.